Here is a 792-residue protein sequence, read N- to C-terminus: Lon protease (792 aa).

The region spanning 16–211 (DAVVVVPVSN…KVSAFLAQRL (196 aa)) is the Lon N-terminal domain. 361-368 (GPPGVGKT) is a binding site for ATP. The Lon proteolytic domain occupies 597–778 (TSVPGVATGL…EDAIEAGLDP (182 aa)). Active-site residues include Ser684 and Lys727.

Belongs to the peptidase S16 family. In terms of assembly, homohexamer. Organized in a ring with a central cavity.

It is found in the cytoplasm. The enzyme catalyses Hydrolysis of proteins in presence of ATP.. Its function is as follows. ATP-dependent serine protease that mediates the selective degradation of mutant and abnormal proteins as well as certain short-lived regulatory proteins. Required for cellular homeostasis and for survival from DNA damage and developmental changes induced by stress. Degrades polypeptides processively to yield small peptide fragments that are 5 to 10 amino acids long. Binds to DNA in a double-stranded, site-specific manner. The chain is Lon protease from Phenylobacterium zucineum (strain HLK1).